We begin with the raw amino-acid sequence, 206 residues long: Urease accessory protein UreG (206 aa).

A GTP-binding site is contributed by 13–20 (GPVGSGKT).

The protein belongs to the SIMIBI class G3E GTPase family. UreG subfamily. As to quaternary structure, homodimer. UreD, UreF and UreG form a complex that acts as a GTP-hydrolysis-dependent molecular chaperone, activating the urease apoprotein by helping to assemble the nickel containing metallocenter of UreC. The UreE protein probably delivers the nickel.

It is found in the cytoplasm. In terms of biological role, facilitates the functional incorporation of the urease nickel metallocenter. This process requires GTP hydrolysis, probably effectuated by UreG. The chain is Urease accessory protein UreG from Haloquadratum walsbyi (strain DSM 16790 / HBSQ001).